We begin with the raw amino-acid sequence, 145 residues long: Holo-[acyl-carrier-protein] synthase (145 aa).

Mg(2+) is bound by residues aspartate 9 and glutamate 63.

This sequence belongs to the P-Pant transferase superfamily. AcpS family. The cofactor is Mg(2+).

The protein localises to the cytoplasm. The catalysed reaction is apo-[ACP] + CoA = holo-[ACP] + adenosine 3',5'-bisphosphate + H(+). Functionally, transfers the 4'-phosphopantetheine moiety from coenzyme A to a Ser of acyl-carrier-protein. The polypeptide is Holo-[acyl-carrier-protein] synthase (Burkholderia vietnamiensis (strain G4 / LMG 22486) (Burkholderia cepacia (strain R1808))).